The following is an 89-amino-acid chain: Otospiralin (89 aa).

The first 21 residues, 1–21 (MQACMVPGLALCLLLGPLAGA), serve as a signal peptide directing secretion.

It belongs to the otospiralin family. As to expression, ear specific.

The protein localises to the secreted. Its function is as follows. May be essential for the survival of the neurosensory epithelium of the inner ear. This is Otospiralin (OTOS) from Homo sapiens (Human).